The primary structure comprises 291 residues: Putative transport permease ycf38 (291 aa).

6 helical membrane passes run 47–67 (ATLMAGIIQPLLWLILFGGLF), 87–107 (SGIIIFTSFTGALNSGLPLMF), 135–155 (FMTCISLIQVVFIVTASLFMG), 165–185 (MIFGLMILLVTVGVTMLSLAL), 195–215 (LLAFILVVNLPFLFSSTALAP), and 262–282 (ICLGQIIILLIALDIMAAYLV). An ABC transmembrane type-2 domain is found at 47-289 (ATLMAGIIQP…YLVSNILKAK (243 aa)).

It belongs to the ABC-2 integral membrane protein family.

The protein localises to the plastid. Its subcellular location is the chloroplast membrane. The protein is Putative transport permease ycf38 (ycf38) of Pyropia yezoensis (Susabi-nori).